The chain runs to 223 residues: MEDVKLQFPSLPLCKEEAEDWAYPMRREMQEILPGLFLGPYSAAMKSKLSVFQKCGITHVICIRQNIEANFIKPNFQQLFRYLVLDIADNPVENIIRFFPMSKEFIDGCLQTGGKVLIHGNAGISRSAALVIAYIMETFGIKYRDAFTYVQERRFCINPNAGFVHQLQEYEAIYLAKLTIKMMSPLQLGRPLCIQSGATGSLKRTLDDEDELGNMQVSAAHEG.

Positions 28 to 176 (EMQEILPGLF…LQEYEAIYLA (149 aa)) constitute a Tyrosine-protein phosphatase domain.

The protein belongs to the protein-tyrosine phosphatase family. Non-receptor class subfamily.

Catalytically inactive phosphatase. The sequence is that of Serine/threonine/tyrosine-interacting protein A (styx-a) from Xenopus laevis (African clawed frog).